Consider the following 56-residue polypeptide: MEERRCSFCNTRITPGTGKLYAKKDGTVYYFCSSKCEKNMRLGRVSRKIKWARKGA.

Residues C6, C9, C32, and C36 each contribute to the Zn(2+) site. A C4-type zinc finger spans residues 6 to 36 (CSFCNTRITPGTGKLYAKKDGTVYYFCSSKC).

Belongs to the eukaryotic ribosomal protein eL24 family. Part of the 50S ribosomal subunit. Forms a cluster with proteins L3 and L14. It depends on Zn(2+) as a cofactor.

Binds to the 23S rRNA. This is Large ribosomal subunit protein eL24 from Methanothrix thermoacetophila (strain DSM 6194 / JCM 14653 / NBRC 101360 / PT) (Methanosaeta thermophila).